Here is a 427-residue protein sequence, read N- to C-terminus: UDP-N-acetylglucosamine 1-carboxyvinyltransferase 1 (427 aa).

23–24 (KN) serves as a coordination point for phosphoenolpyruvate. R96 contributes to the UDP-N-acetyl-alpha-D-glucosamine binding site. C120 (proton donor) is an active-site residue. Residue C120 is modified to 2-(S-cysteinyl)pyruvic acid O-phosphothioketal. UDP-N-acetyl-alpha-D-glucosamine-binding positions include 125-129 (RPIDL), D309, and V331.

It belongs to the EPSP synthase family. MurA subfamily.

The protein resides in the cytoplasm. The enzyme catalyses phosphoenolpyruvate + UDP-N-acetyl-alpha-D-glucosamine = UDP-N-acetyl-3-O-(1-carboxyvinyl)-alpha-D-glucosamine + phosphate. It participates in cell wall biogenesis; peptidoglycan biosynthesis. Its function is as follows. Cell wall formation. Adds enolpyruvyl to UDP-N-acetylglucosamine. In Streptococcus pneumoniae serotype 4 (strain ATCC BAA-334 / TIGR4), this protein is UDP-N-acetylglucosamine 1-carboxyvinyltransferase 1.